The primary structure comprises 623 residues: Kelch repeat and BTB domain-containing protein 12 (623 aa).

Residues 31 to 98 (IDVVLTAEGE…MYNAALEINN (68 aa)) enclose the BTB domain. The 103-residue stretch at 133–235 (CLGIYYFAKQ…NPSFLRQALR (103 aa)) folds into the BACK domain. 4 Kelch repeats span residues 386 to 436 (DLYV…TVNN), 437 to 492 (KLYV…VVNS), 494 to 547 (IYVL…STNA), and 553 to 603 (KLYV…LVAR).

This is Kelch repeat and BTB domain-containing protein 12 (KBTBD12) from Homo sapiens (Human).